The primary structure comprises 740 residues: Pheromone-regulated membrane protein 10 (740 aa).

3 disordered regions span residues 1-48 (MGKN…RSGL), 65-97 (FADE…KEEC), and 241-269 (NQPG…PTGE). The span at 7 to 18 (QAAEGEEARRGS) shows a compositional bias: basic and acidic residues. A compositionally biased stretch (low complexity) spans 19-33 (ESSGSSAEPSGAVAE). The segment covering 67-76 (DEDEVVEQDE) has biased composition (acidic residues). A compositionally biased stretch (polar residues) spans 256-267 (SAQTLSSETLPT). 10 helical membrane-spanning segments follow: residues 422–442 (AWMC…FAFG), 445–465 (WINL…QFIV), 475–495 (VFEI…GSIP), 499–519 (ICFG…YIIL), 541–561 (IIYS…FGWI), 574–594 (ELSP…LSLI), 599–619 (WSQI…TYWS), 622–642 (HFTA…GIMG), 651–671 (GLAM…GIAS), and 707–727 (ITMI…TLVV).

This sequence belongs to the ThrE exporter (TC 2.A.79) family.

The protein resides in the membrane. This chain is Pheromone-regulated membrane protein 10, found in Eremothecium gossypii (strain ATCC 10895 / CBS 109.51 / FGSC 9923 / NRRL Y-1056) (Yeast).